The primary structure comprises 208 residues: MQILAISKPRNIEEAQLLRSHHELRARVFSDRLGWEVNVVGGCESDTFDDLQPTYILAVSSNDRVVGCARLLPALGPTMVANVFPSLLSAGHLNAHSSMVESSRFCVDTFLAESRGDGSIHEATLTMFAGIIEWSVANRYTEIVTVTDLRFERILARVGWPLQRIGEPRPIGATVAVAGTLPAKADTFMRLRPANYRSQIISTFGQSA.

This sequence belongs to the autoinducer synthase family.

The catalysed reaction is a fatty acyl-[ACP] + S-adenosyl-L-methionine = an N-acyl-L-homoserine lactone + S-methyl-5'-thioadenosine + holo-[ACP] + H(+). Functionally, required for the synthesis of OHHL (N-(3-oxooctanoyl)-L-homoserine lactone), an autoinducer molecule which binds to TraR and thus acts in the control of conjugal transfer. The sequence is that of Probable acyl-homoserine-lactone synthase (traI) from Sinorhizobium fredii (strain NBRC 101917 / NGR234).